The sequence spans 313 residues: Protoheme IX farnesyltransferase (313 aa).

8 helical membrane passes run 34-54 (VIELLLVTTIPAMLLADRGTV), 56-76 (PLLILNTLVGGLLAAAGANTL), 105-125 (HALIFGLALSVLSFFWLWWTT), 128-148 (LSAHLAGATIAFYVLIYTLVL), 152-172 (TSQNVVWGGAAGCMPVMIGWS), 173-193 (AVTGTIQWPALVMFLIIFFWT), 243-263 (LALATGWLYAAVAIVAGTWFL), and 291-311 (YLAVVFCALAVDSALALPTLF).

It belongs to the UbiA prenyltransferase family. Protoheme IX farnesyltransferase subfamily.

Its subcellular location is the cell membrane. It catalyses the reaction heme b + (2E,6E)-farnesyl diphosphate + H2O = Fe(II)-heme o + diphosphate. It participates in porphyrin-containing compound metabolism; heme O biosynthesis; heme O from protoheme: step 1/1. Its function is as follows. Converts heme B (protoheme IX) to heme O by substitution of the vinyl group on carbon 2 of heme B porphyrin ring with a hydroxyethyl farnesyl side group. The polypeptide is Protoheme IX farnesyltransferase (Mycolicibacterium vanbaalenii (strain DSM 7251 / JCM 13017 / BCRC 16820 / KCTC 9966 / NRRL B-24157 / PYR-1) (Mycobacterium vanbaalenii)).